The sequence spans 366 residues: Cell division protein FtsY homolog, chloroplastic (366 aa).

A chloroplast-targeting transit peptide spans 1 to 40 (MATSSAHLSFLAGRISPFSSERIGLFPLRGEFRPRMTRFR). Residues 171–178 (GVNGGGKT), 254–258 (DTSGR), and 318–321 (TKLD) contribute to the GTP site.

This sequence belongs to the GTP-binding SRP family. Monomer. Interacts with FFC/cpSRP54, a component of the cpSRP complex, composed of a FFC/cpSRP54 monomer and a CAO/cpSRP43 dimer. The complex with FFC/cpSRP54 is formed when both proteins are bound with GTP. Expressed in green tissues. Low levels in roots and seeds.

The protein localises to the plastid. The protein resides in the chloroplast stroma. It is found in the chloroplast thylakoid membrane. Signal recognition particle receptor protein. Binds GTP specifically. The GTPase activity is inhibited by the N-terminus of the protein until binding to the thylakoid membrane. Activates the GTPase activity of FFC/cpSRP54 when bound to the cpSRP complex. Required for light-harvesting chlorophyll a/b-binding protein (LHCP) integration into thylakoids. Might be also functionally linked to the Sec translocation machinery. The chain is Cell division protein FtsY homolog, chloroplastic (CPFTSY) from Arabidopsis thaliana (Mouse-ear cress).